The sequence spans 441 residues: Histidinol dehydrogenase (441 aa).

Threonine 240, glutamine 262, and histidine 265 together coordinate substrate. Residues glutamine 262 and histidine 265 each contribute to the Zn(2+) site. Active-site proton acceptor residues include glutamate 332 and histidine 333. Substrate-binding residues include histidine 333, aspartate 366, glutamate 420, and histidine 425. A Zn(2+)-binding site is contributed by aspartate 366. Histidine 425 contacts Zn(2+).

This sequence belongs to the histidinol dehydrogenase family. Requires Zn(2+) as cofactor.

The catalysed reaction is L-histidinol + 2 NAD(+) + H2O = L-histidine + 2 NADH + 3 H(+). It functions in the pathway amino-acid biosynthesis; L-histidine biosynthesis; L-histidine from 5-phospho-alpha-D-ribose 1-diphosphate: step 9/9. Catalyzes the sequential NAD-dependent oxidations of L-histidinol to L-histidinaldehyde and then to L-histidine. In Streptomyces avermitilis (strain ATCC 31267 / DSM 46492 / JCM 5070 / NBRC 14893 / NCIMB 12804 / NRRL 8165 / MA-4680), this protein is Histidinol dehydrogenase.